The chain runs to 119 residues: MSRVKRGVTAHAKHKKVYKAAKGFYGRRKNTIRAAKAAVEKAGQYAFRDRKRKKRTFRALWIQRLNAAVRPFELTYSRFIDGLSKSGITVDRKVLSDLAINEPAAFEAIVVKAKAALAA.

Belongs to the bacterial ribosomal protein bL20 family.

Its function is as follows. Binds directly to 23S ribosomal RNA and is necessary for the in vitro assembly process of the 50S ribosomal subunit. It is not involved in the protein synthesizing functions of that subunit. The protein is Large ribosomal subunit protein bL20 of Bradyrhizobium sp. (strain ORS 278).